A 509-amino-acid chain; its full sequence is ATP synthase subunit alpha (509 aa).

169–176 (GDRQTGKT) contacts ATP.

This sequence belongs to the ATPase alpha/beta chains family. In terms of assembly, F-type ATPases have 2 components, CF(1) - the catalytic core - and CF(0) - the membrane proton channel. CF(1) has five subunits: alpha(3), beta(3), gamma(1), delta(1), epsilon(1). CF(0) has three main subunits: a(1), b(2) and c(9-12). The alpha and beta chains form an alternating ring which encloses part of the gamma chain. CF(1) is attached to CF(0) by a central stalk formed by the gamma and epsilon chains, while a peripheral stalk is formed by the delta and b chains.

It is found in the cell inner membrane. It carries out the reaction ATP + H2O + 4 H(+)(in) = ADP + phosphate + 5 H(+)(out). Functionally, produces ATP from ADP in the presence of a proton gradient across the membrane. The alpha chain is a regulatory subunit. This Rhizobium johnstonii (strain DSM 114642 / LMG 32736 / 3841) (Rhizobium leguminosarum bv. viciae) protein is ATP synthase subunit alpha.